The following is a 240-amino-acid chain: Lipoprotein signal peptidase (240 aa).

A run of 4 helical transmembrane segments spans residues 38 to 58, 73 to 93, 98 to 118, and 120 to 140; these read LIWK…TSFL, LIPG…FGTL, PSLV…VLLF, and SNYL…SNII. Active-site residues include Asp-162 and Asp-179. The chain crosses the membrane as a helical span at residues 177–197; sequence FPDTFVIIGMIFVGIQIIISF.

It belongs to the peptidase A8 family.

It localises to the cell membrane. It catalyses the reaction Release of signal peptides from bacterial membrane prolipoproteins. Hydrolyzes -Xaa-Yaa-Zaa-|-(S,diacylglyceryl)Cys-, in which Xaa is hydrophobic (preferably Leu), and Yaa (Ala or Ser) and Zaa (Gly or Ala) have small, neutral side chains.. Its pathway is protein modification; lipoprotein biosynthesis (signal peptide cleavage). In terms of biological role, this protein specifically catalyzes the removal of signal peptides from prolipoproteins. This chain is Lipoprotein signal peptidase, found in Malacoplasma penetrans (strain HF-2) (Mycoplasma penetrans).